A 615-amino-acid polypeptide reads, in one-letter code: 1-deoxy-D-xylulose-5-phosphate synthase (615 aa).

Thiamine diphosphate contacts are provided by residues His-72 and 111–113 (GHS). Asp-142 lines the Mg(2+) pocket. Thiamine diphosphate contacts are provided by residues 143 to 144 (GA), Asn-171, Tyr-278, and Glu-360. Asn-171 serves as a coordination point for Mg(2+).

The protein belongs to the transketolase family. DXPS subfamily. As to quaternary structure, homodimer. It depends on Mg(2+) as a cofactor. The cofactor is thiamine diphosphate.

It catalyses the reaction D-glyceraldehyde 3-phosphate + pyruvate + H(+) = 1-deoxy-D-xylulose 5-phosphate + CO2. The protein operates within metabolic intermediate biosynthesis; 1-deoxy-D-xylulose 5-phosphate biosynthesis; 1-deoxy-D-xylulose 5-phosphate from D-glyceraldehyde 3-phosphate and pyruvate: step 1/1. Its function is as follows. Catalyzes the acyloin condensation reaction between C atoms 2 and 3 of pyruvate and glyceraldehyde 3-phosphate to yield 1-deoxy-D-xylulose-5-phosphate (DXP). This Campylobacter jejuni subsp. doylei (strain ATCC BAA-1458 / RM4099 / 269.97) protein is 1-deoxy-D-xylulose-5-phosphate synthase.